Here is a 518-residue protein sequence, read N- to C-terminus: Crotonobetaine/carnitine--CoA ligase (518 aa).

Belongs to the ATP-dependent AMP-binding enzyme family.

It carries out the reaction 4-(trimethylamino)butanoate + ATP + CoA = 4-(trimethylamino)butanoyl-CoA + AMP + diphosphate. It catalyses the reaction crotonobetaine + ATP + CoA = crotonobetainyl-CoA + AMP + diphosphate. The catalysed reaction is (R)-carnitine + ATP + CoA = (R)-carnitinyl-CoA + AMP + diphosphate. Its pathway is amine and polyamine metabolism; carnitine metabolism. In terms of biological role, catalyzes the transfer of CoA to carnitine, generating the initial carnitinyl-CoA needed for the CaiB reaction cycle. Also has activity toward crotonobetaine and gamma-butyrobetaine. The polypeptide is Crotonobetaine/carnitine--CoA ligase (Proteus mirabilis (strain HI4320)).